Consider the following 261-residue polypeptide: Taurine import ATP-binding protein TauB (261 aa).

In terms of domain architecture, ABC transporter spans 4–233; it reads LTADRVSVRY…RWRAGDSARA (230 aa). Residue 38–45 coordinates ATP; sequence GPSGCGKT.

The protein belongs to the ABC transporter superfamily. Taurine importer (TC 3.A.1.17.1) family. In terms of assembly, the complex is composed of two ATP-binding proteins (TauB), two transmembrane proteins (TauC) and a solute-binding protein (TauA).

It is found in the cell inner membrane. It carries out the reaction taurine(out) + ATP + H2O = taurine(in) + ADP + phosphate + H(+). In terms of biological role, part of the ABC transporter complex TauABC involved in taurine import. Responsible for energy coupling to the transport system. In Chromobacterium violaceum (strain ATCC 12472 / DSM 30191 / JCM 1249 / CCUG 213 / NBRC 12614 / NCIMB 9131 / NCTC 9757 / MK), this protein is Taurine import ATP-binding protein TauB.